Consider the following 79-residue polypeptide: CDC42 small effector protein 1 (79 aa).

Residues Cys10 and Cys11 are each lipidated (S-palmitoyl cysteine). The 14-residue stretch at 30–43 folds into the CRIB domain; it reads IGEPMNFVHLTHIG. The interval 48 to 79 is disordered; the sequence is GAGDGLAMTGAVQEQMRSKGNRDRPWSNSRGL. Over residues 63-72 the composition is skewed to basic and acidic residues; the sequence is MRSKGNRDRP.

This sequence belongs to the CDC42SE/SPEC family. In terms of assembly, interacts with CDC42 (in GTP-bound form). Interacts weakly with RAC1 and not at all with RHOA.

The protein resides in the cytoplasm. Its subcellular location is the cytoskeleton. It is found in the cell membrane. Its function is as follows. Probably involved in the organization of the actin cytoskeleton by acting downstream of CDC42, inducing actin filament assembly. Alters CDC42-induced cell shape changes. In activated T-cells, may play a role in CDC42-mediated F-actin accumulation at the immunological synapse. May play a role in early contractile events in phagocytosis in macrophages. This is CDC42 small effector protein 1 (CDC42SE1) from Bos taurus (Bovine).